Here is a 789-residue protein sequence, read N- to C-terminus: MALDFLSTDCPLGIVSDIISNVNTIKEYGYSSELSTTLAPRPSREQVLEYITRVVDKLKPLCRVDERLYIACGELVHLRIKARNTDLKYWLKSSEIDLSDVVEQAILEHIDFVQKTLNSFETSEYRDLCSLGLQSALKYEEMYLAKMRGGRLESMGQFFLRLATTATHYTMEQPAMARVLVSGEVGWTYIFRAFFTALAGQVVIPATPIMLFGGRDCGSMASCYLLNPRVTDMNSAIPALMEEVGPILCNRGGIGLSLQRFNTPPTEGCSRGVMALLKLLDSMTMAINSDGERPTGVCVYFEPWHADIRAILNMRGMLARDETVRCDNIFACMWTPDLFFDRYQRYVDGESGIMWTLFDDTASHLCHMYGNDFTREYERLERCGFGIDAIPIQDMAFIIVRSAVMTGSPFLMFKDACNRHYHFDMRQRGAIMGSNLCTEIIQHADETQNGVCNLASINLPKCLALPPPNIAGVPYFDFAALGRAAATATIFVNAMMCASTYPTVKSQKGVEENRSLGLGIQGLHTTFLMLDLDMASPEAHQLNKQIAERLLLNSMKASATLCKLGMQPFKGFEDSKYSRGELPFDAYPNVTLTNRNAWRRLRTDIKQYGLYNSQFVAYMPTVSSSQVTESSEGFSPVYTNLFSKVTATGEVLRPNVLLMRTIRSIFPQECARLQALSTLEAAKWSVVGAFGDLPVGHPLSKFKTAFEYDQTMLINMCADRAAFVDQSQSMSLFITEPADGKLPASRIMNLLVHAYKRGLKTGMYYCKIKKATNNGVFVGGDLVCTSCSL.

Substrate is bound by residues Thr-207, 222–223 (SC), Gly-253, 435–439 (NLCTE), and 620–624 (PTVSS). A disulfide bond links Cys-223 and Cys-452. Asn-435 (proton acceptor) is an active-site residue. Residue Cys-437 is the Cysteine radical intermediate of the active site. The Proton acceptor role is filled by Glu-439.

Belongs to the ribonucleoside diphosphate reductase large chain family. As to quaternary structure, heterotetramer composed of a homodimer of the large subunit (R1) and a homodimer of the small subunit (R2). Larger multisubunit protein complex are also active, composed of (R1)n(R2)n.

It catalyses the reaction a 2'-deoxyribonucleoside 5'-diphosphate + [thioredoxin]-disulfide + H2O = a ribonucleoside 5'-diphosphate + [thioredoxin]-dithiol. In terms of biological role, ribonucleoside-diphosphate reductase holoenzyme provides the precursors necessary for viral DNA synthesis. Allows virus growth in non-dividing cells, as well as reactivation from latency in infected hosts. Catalyzes the biosynthesis of deoxyribonucleotides from the corresponding ribonucleotides. The chain is Ribonucleoside-diphosphate reductase large subunit from Equus caballus (Horse).